The following is a 427-amino-acid chain: 3-phosphoshikimate 1-carboxyvinyltransferase (427 aa).

3 residues coordinate 3-phosphoshikimate: Lys-20, Ser-21, and Arg-25. Residue Lys-20 coordinates phosphoenolpyruvate. Residues Gly-92 and Arg-120 each coordinate phosphoenolpyruvate. The 3-phosphoshikimate site is built by Ser-166, Gln-168, Asp-312, and Lys-339. Residue Gln-168 coordinates phosphoenolpyruvate. Asp-312 (proton acceptor) is an active-site residue. Phosphoenolpyruvate is bound by residues Arg-343 and Arg-385.

This sequence belongs to the EPSP synthase family. In terms of assembly, monomer.

The protein localises to the cytoplasm. The catalysed reaction is 3-phosphoshikimate + phosphoenolpyruvate = 5-O-(1-carboxyvinyl)-3-phosphoshikimate + phosphate. It participates in metabolic intermediate biosynthesis; chorismate biosynthesis; chorismate from D-erythrose 4-phosphate and phosphoenolpyruvate: step 6/7. In terms of biological role, catalyzes the transfer of the enolpyruvyl moiety of phosphoenolpyruvate (PEP) to the 5-hydroxyl of shikimate-3-phosphate (S3P) to produce enolpyruvyl shikimate-3-phosphate and inorganic phosphate. The polypeptide is 3-phosphoshikimate 1-carboxyvinyltransferase (Streptococcus equi subsp. equi (strain 4047)).